The primary structure comprises 161 residues: Crossover junction endodeoxyribonuclease RuvC (161 aa).

Catalysis depends on residues Asp8, Glu67, and Asp139. Positions 8, 67, and 139 each coordinate Mg(2+).

Belongs to the RuvC family. In terms of assembly, homodimer which binds Holliday junction (HJ) DNA. The HJ becomes 2-fold symmetrical on binding to RuvC with unstacked arms; it has a different conformation from HJ DNA in complex with RuvA. In the full resolvosome a probable DNA-RuvA(4)-RuvB(12)-RuvC(2) complex forms which resolves the HJ. Requires Mg(2+) as cofactor.

It is found in the cytoplasm. The enzyme catalyses Endonucleolytic cleavage at a junction such as a reciprocal single-stranded crossover between two homologous DNA duplexes (Holliday junction).. Functionally, the RuvA-RuvB-RuvC complex processes Holliday junction (HJ) DNA during genetic recombination and DNA repair. Endonuclease that resolves HJ intermediates. Cleaves cruciform DNA by making single-stranded nicks across the HJ at symmetrical positions within the homologous arms, yielding a 5'-phosphate and a 3'-hydroxyl group; requires a central core of homology in the junction. The consensus cleavage sequence is 5'-(A/T)TT(C/G)-3'. Cleavage occurs on the 3'-side of the TT dinucleotide at the point of strand exchange. HJ branch migration catalyzed by RuvA-RuvB allows RuvC to scan DNA until it finds its consensus sequence, where it cleaves and resolves the cruciform DNA. This chain is Crossover junction endodeoxyribonuclease RuvC, found in Wigglesworthia glossinidia brevipalpis.